The chain runs to 452 residues: 23S rRNA (uracil(1939)-C(5))-methyltransferase RlmD (452 aa).

The interval 1–23 is disordered; the sequence is MSRKKSNGGLRFQPAGGNRATQI. The TRAM domain occupies 22–80; that stretch reads QIPVGKKQRLLIERVAGDGRGIAFIEGRTWFVSGALGGEEVEARVLGARGKVVEARLER. Cys93, Cys99, Cys102, and Cys181 together coordinate [4Fe-4S] cluster. Residues Gln285, Phe314, Asn319, Glu335, Asp362, and Asp383 each coordinate S-adenosyl-L-methionine. Residue Cys409 is the Nucleophile of the active site.

This sequence belongs to the class I-like SAM-binding methyltransferase superfamily. RNA M5U methyltransferase family. RlmD subfamily.

The catalysed reaction is uridine(1939) in 23S rRNA + S-adenosyl-L-methionine = 5-methyluridine(1939) in 23S rRNA + S-adenosyl-L-homocysteine + H(+). Catalyzes the formation of 5-methyl-uridine at position 1939 (m5U1939) in 23S rRNA. This Pseudomonas entomophila (strain L48) protein is 23S rRNA (uracil(1939)-C(5))-methyltransferase RlmD.